The primary structure comprises 523 residues: Ubiquilin (523 aa).

The Ubiquitin-like domain occupies 2–77 (VKINIKSSTD…VHLVKGAAPP (76 aa)). The tract at residues 70–99 (LVKGAAPPPPPPVEQQVPTPSNTQPQGIPG) is disordered. STI1 domains lie at 100–135 (VPQN…FRDM) and 139–178 (NPEM…MREM). The span at 215 to 227 (NQQAASQNQTNSN) shows a compositional bias: low complexity. Residues 215–325 (NQQAASQNQT…ASMFGGGGGG (111 aa)) are disordered. Residues 228-241 (PIQTNTDANPNSQP) are compositionally biased toward polar residues. The span at 245-278 (PWSTNSSSTSSNPTSSSPSSRPTTGSSTNTGASN) shows a compositional bias: low complexity. The span at 285–296 (SGGGGGMGGGTN) shows a compositional bias: gly residues. A compositionally biased stretch (low complexity) spans 297-310 (NTGTNNTGSTNNTG). 2 STI1 domains span residues 339–380 (DPER…RQMM) and 383–415 (NPQL…QQAM). The 44-residue stretch at 480–523 (PPEQRFRLQLEQLEELGFVDRAANISALTSTNGNINLAIDRLLR) folds into the UBA domain.

Functionally, stable protein which acts as an antagonist of nosA by repressing cellular differentiation after the tight-aggregate stage, when cells differentiate into two precursor cell types, prespore and prestalk cells, prior to the formation of fruiting bodies. This Dictyostelium discoideum (Social amoeba) protein is Ubiquilin (ubqln).